The sequence spans 114 residues: T cell receptor beta variable 5-5 (114 aa).

Positions 1-21 are cleaved as a signal peptide; it reads MGPGLLCWVLLCLLGAGPVDA. The Ig-like domain occupies 22–114; sequence GVTQSPTHLI…SALYLCASSL (93 aa). Cys-42 and Cys-110 are joined by a disulfide. Asn-90 is a glycosylation site (N-linked (GlcNAc...) asparagine).

As to quaternary structure, alpha-beta TR is a heterodimer composed of an alpha and beta chain; disulfide-linked. The alpha-beta TR is associated with the transmembrane signaling CD3 coreceptor proteins to form the TR-CD3 (TcR or TCR). The assembly of alpha-beta TR heterodimers with CD3 occurs in the endoplasmic reticulum where a single alpha-beta TR heterodimer associates with one CD3D-CD3E heterodimer, one CD3G-CD3E heterodimer and one CD247 homodimer forming a stable octameric structure. CD3D-CD3E and CD3G-CD3E heterodimers preferentially associate with TR alpha and TR beta chains, respectively. The association of the CD247 homodimer is the last step of TcR assembly in the endoplasmic reticulum and is required for transport to the cell surface.

Its subcellular location is the cell membrane. V region of the variable domain of T cell receptor (TR) beta chain that participates in the antigen recognition. Alpha-beta T cell receptors are antigen specific receptors which are essential to the immune response and are present on the cell surface of T lymphocytes. Recognize peptide-major histocompatibility (MH) (pMH) complexes that are displayed by antigen presenting cells (APC), a prerequisite for efficient T cell adaptive immunity against pathogens. Binding of alpha-beta TR to pMH complex initiates TR-CD3 clustering on the cell surface and intracellular activation of LCK that phosphorylates the ITAM motifs of CD3G, CD3D, CD3E and CD247 enabling the recruitment of ZAP70. In turn ZAP70 phosphorylates LAT, which recruits numerous signaling molecules to form the LAT signalosome. The LAT signalosome propagates signal branching to three major signaling pathways, the calcium, the mitogen-activated protein kinase (MAPK) kinase and the nuclear factor NF-kappa-B (NF-kB) pathways, leading to the mobilization of transcription factors that are critical for gene expression and essential for T cell growth and differentiation. The T cell repertoire is generated in the thymus, by V-(D)-J rearrangement. This repertoire is then shaped by intrathymic selection events to generate a peripheral T cell pool of self-MH restricted, non-autoaggressive T cells. Post-thymic interaction of alpha-beta TR with the pMH complexes shapes TR structural and functional avidity. The chain is T cell receptor beta variable 5-5 from Homo sapiens (Human).